The following is a 721-amino-acid chain: Dipeptidyl-peptidase 5 (721 aa).

The signal sequence occupies residues 1–18; it reads MGAFRWLSIAAAASTALA. N-linked (GlcNAc...) asparagine glycosylation is found at asparagine 75, asparagine 94, asparagine 151, and asparagine 254. The segment at 271-297 is disordered; the sequence is ARPINGPDSPGTPKGIKGDSSSPVFSP. Residues asparagine 380 and asparagine 450 are each glycosylated (N-linked (GlcNAc...) asparagine). The active-site Charge relay system is the serine 560. The N-linked (GlcNAc...) asparagine glycan is linked to asparagine 607. Active-site charge relay system residues include aspartate 643 and histidine 675.

Belongs to the peptidase S9C family. Post-translationally, N-glycosylated. Expressed in mycelia and conidia.

The protein localises to the secreted. Functionally, may be involved in metabolism of dipeptides or may affect host defense mechanisms. Has a substrate specificity limited to the hydrolysis of X-Ala, His-Ser, and Ser-Tyr dipeptides at a neutral pH optimum. This Aspergillus fumigatus (strain CBS 144.89 / FGSC A1163 / CEA10) (Neosartorya fumigata) protein is Dipeptidyl-peptidase 5.